Consider the following 532-residue polypeptide: Flavin-containing monooxygenase 3 (532 aa).

Residues 9–13 (GAGVS), E32, 40–41 (LW), and 61–62 (NS) each bind FAD. NADP(+)-binding positions include 60-61 (TN) and 195-198 (SGCD). At S401 the chain carries Phosphoserine. A helical membrane pass occupies residues 512-532 (CHLVKLFVLPVLFIAVFLALI).

It belongs to the FMO family. FAD serves as cofactor.

It is found in the microsome membrane. Its subcellular location is the endoplasmic reticulum membrane. It catalyses the reaction trimethylamine + NADPH + O2 = trimethylamine N-oxide + NADP(+) + H2O. The catalysed reaction is N,N-dimethylaniline + NADPH + O2 + H(+) = N,N-dimethylaniline N-oxide + NADP(+) + H2O. It carries out the reaction hypotaurine + NADPH + O2 + H(+) = taurine + NADP(+) + H2O. The enzyme catalyses (S)-nicotine + NADPH + O2 = trans-(S)-nicotine N(1')-oxide + NADP(+) + H2O. It catalyses the reaction albendazole + NADPH + O2 + H(+) = albendazole S-oxide + NADP(+) + H2O. Essential hepatic enzyme that catalyzes the oxygenation of a wide variety of nitrogen- and sulfur-containing compounds including drugs as well as dietary compounds. Plays an important role in the metabolism of trimethylamine (TMA), via the production of trimethylamine N-oxide (TMAO) metabolite. TMA is generated by the action of gut microbiota using dietary precursors such as choline, choline containing compounds, betaine or L-carnitine. By regulating TMAO concentration, FMO3 directly impacts both platelet responsiveness and rate of thrombus formation. The polypeptide is Flavin-containing monooxygenase 3 (FMO3) (Canis lupus familiaris (Dog)).